We begin with the raw amino-acid sequence, 519 residues long: Keratin, type II cytoskeletal 1b (519 aa).

The head stretch occupies residues 1–166 (MSRQFSSQSA…DPEIQKIKTQ (166 aa)). Residues Arg81 and Arg95 each carry the omega-N-methylarginine modification. A coil 1A region spans residues 167–202 (EREQIKTLNNKFASFIDKVRFLEQQNQVLQTKWELL). Positions 167-480 (EREQIKTLNN…ELLEGEESRM (314 aa)) constitute an IF rod domain. Positions 203-221 (QQVNTSTRTSSLEPIFEEF) are linker 1. Residues 222 to 313 (INQLQRQVDV…YLFDTELSQI (92 aa)) form a coil 1B region. A linker 12 region spans residues 314-337 (QTHVSDTNVILSMDNNRSLDLDSI). Residues 338-476 (INAVRTQYEL…ATYRELLEGE (139 aa)) form a coil 2 region. The interval 477-519 (ESRMSGALQSQVSIWALPSNEGNDLGERLHDPQSQVPVPKLGC) is tail. Residues 499 to 519 (NDLGERLHDPQSQVPVPKLGC) are disordered.

This sequence belongs to the intermediate filament family. Undergoes deimination of some arginine residues (citrullination).

The sequence is that of Keratin, type II cytoskeletal 1b (Krt77) from Rattus norvegicus (Rat).